The primary structure comprises 435 residues: 3-phosphoshikimate 1-carboxyvinyltransferase (435 aa).

Residues K21, S22, and R26 each coordinate 3-phosphoshikimate. Residue K21 participates in phosphoenolpyruvate binding. Phosphoenolpyruvate contacts are provided by G99 and R127. 4 residues coordinate 3-phosphoshikimate: S173, Q175, D323, and K350. Position 175 (Q175) interacts with phosphoenolpyruvate. The Proton acceptor role is filled by D323. Residues R354 and R396 each contribute to the phosphoenolpyruvate site.

It belongs to the EPSP synthase family. Monomer.

The protein resides in the cytoplasm. The enzyme catalyses 3-phosphoshikimate + phosphoenolpyruvate = 5-O-(1-carboxyvinyl)-3-phosphoshikimate + phosphate. It functions in the pathway metabolic intermediate biosynthesis; chorismate biosynthesis; chorismate from D-erythrose 4-phosphate and phosphoenolpyruvate: step 6/7. Catalyzes the transfer of the enolpyruvyl moiety of phosphoenolpyruvate (PEP) to the 5-hydroxyl of shikimate-3-phosphate (S3P) to produce enolpyruvyl shikimate-3-phosphate and inorganic phosphate. This is 3-phosphoshikimate 1-carboxyvinyltransferase from Akkermansia muciniphila (strain ATCC BAA-835 / DSM 22959 / JCM 33894 / BCRC 81048 / CCUG 64013 / CIP 107961 / Muc).